Reading from the N-terminus, the 313-residue chain is Non-functional target of rapamycin complex subunit LST8-2 (313 aa).

WD repeat units lie at residues 1-35 (MFEN…CYFS), 38-76 (YPDL…PHIP), 82-121 (SHTK…CQRE), 123-162 (RSVS…CSCE), 166-205 (EVGT…QTMT), 215-255 (AHNS…LEKV), and 258-297 (GHER…EEMV).

Belongs to the WD repeat LST8 family.

Probable non-functional protein. This chain is Non-functional target of rapamycin complex subunit LST8-2, found in Arabidopsis thaliana (Mouse-ear cress).